The chain runs to 150 residues: Deoxyuridine 5'-triphosphate nucleotidohydrolase (150 aa).

Substrate is bound by residues 65-67, Asn-78, and 82-84; these read RSG and TID. The interval 130-150 is disordered; that stretch reads LSDTERGEGGFGHTGVASKAE.

This sequence belongs to the dUTPase family. Requires Mg(2+) as cofactor.

It carries out the reaction dUTP + H2O = dUMP + diphosphate + H(+). Its pathway is pyrimidine metabolism; dUMP biosynthesis; dUMP from dCTP (dUTP route): step 2/2. In terms of biological role, this enzyme is involved in nucleotide metabolism: it produces dUMP, the immediate precursor of thymidine nucleotides and it decreases the intracellular concentration of dUTP so that uracil cannot be incorporated into DNA. The sequence is that of Deoxyuridine 5'-triphosphate nucleotidohydrolase from Chlorobaculum parvum (strain DSM 263 / NCIMB 8327) (Chlorobium vibrioforme subsp. thiosulfatophilum).